The primary structure comprises 364 residues: Uroporphyrinogen decarboxylase (364 aa).

Substrate-binding positions include 28 to 32 (RQAGR), Asp-78, Tyr-160, Thr-215, and His-333.

Belongs to the uroporphyrinogen decarboxylase family. In terms of assembly, homodimer.

The protein localises to the cytoplasm. It carries out the reaction uroporphyrinogen III + 4 H(+) = coproporphyrinogen III + 4 CO2. It participates in porphyrin-containing compound metabolism; protoporphyrin-IX biosynthesis; coproporphyrinogen-III from 5-aminolevulinate: step 4/4. Catalyzes the decarboxylation of four acetate groups of uroporphyrinogen-III to yield coproporphyrinogen-III. The protein is Uroporphyrinogen decarboxylase of Burkholderia cenocepacia (strain ATCC BAA-245 / DSM 16553 / LMG 16656 / NCTC 13227 / J2315 / CF5610) (Burkholderia cepacia (strain J2315)).